The sequence spans 101 residues: uncharacterized protein (101 aa).

2 helical membrane-spanning segments follow: residues 52 to 72 (VVFIIVFLTGWAAKSIIVKLL) and 75 to 95 (LWRLSTLIPSFFASFFMSLLG).

The protein localises to the endoplasmic reticulum membrane. This is an uncharacterized protein from Schizosaccharomyces pombe (strain 972 / ATCC 24843) (Fission yeast).